The sequence spans 237 residues: Leucyl/phenylalanyl-tRNA--protein transferase (237 aa).

It belongs to the L/F-transferase family.

It localises to the cytoplasm. It catalyses the reaction N-terminal L-lysyl-[protein] + L-leucyl-tRNA(Leu) = N-terminal L-leucyl-L-lysyl-[protein] + tRNA(Leu) + H(+). The enzyme catalyses N-terminal L-arginyl-[protein] + L-leucyl-tRNA(Leu) = N-terminal L-leucyl-L-arginyl-[protein] + tRNA(Leu) + H(+). It carries out the reaction L-phenylalanyl-tRNA(Phe) + an N-terminal L-alpha-aminoacyl-[protein] = an N-terminal L-phenylalanyl-L-alpha-aminoacyl-[protein] + tRNA(Phe). Its function is as follows. Functions in the N-end rule pathway of protein degradation where it conjugates Leu, Phe and, less efficiently, Met from aminoacyl-tRNAs to the N-termini of proteins containing an N-terminal arginine or lysine. The polypeptide is Leucyl/phenylalanyl-tRNA--protein transferase (Aromatoleum aromaticum (strain DSM 19018 / LMG 30748 / EbN1) (Azoarcus sp. (strain EbN1))).